We begin with the raw amino-acid sequence, 332 residues long: Alpha-N-acetylgalactosaminide alpha-2,6-sialyltransferase 6 (332 aa).

The disordered stretch occupies residues 1-26 (MACPRPLSQCDHTPLPGPPAGHWPLP). Topologically, residues 1–42 (MACPRPLSQCDHTPLPGPPAGHWPLPLSRRRREMKSNKEQRS) are cytoplasmic. A helical; Signal-anchor for type II membrane protein transmembrane segment spans residues 43–63 (AVFVILFALITILILYSSSSA). Topologically, residues 64 to 332 (NEVFHYGSLR…GITFSHPSWT (269 aa)) are lumenal. N-linked (GlcNAc...) asparagine glycosylation is present at Asn-97. A disulfide bond links Cys-107 and Cys-255.

Belongs to the glycosyltransferase 29 family.

It is found in the golgi apparatus membrane. It carries out the reaction a ganglioside GM1b (d18:1(4E)) + CMP-N-acetyl-beta-neuraminate = a ganglioside GD1alpha (d18:1(4E)) + CMP + H(+). The catalysed reaction is N-acetyl-alpha-neuraminosyl-(2-&gt;3)-beta-D-galactosyl-(1-&gt;3)-N-acetyl-beta-D-glucosaminyl-(1-&gt;3)-beta-D-galactosyl-(1-&gt;4)-beta-D-glucosyl-(1&lt;-&gt;1')-N-acyl-sphing-4-enine + CMP-N-acetyl-beta-neuraminate = N-acetyl-alpha-neuraminosyl-(2-&gt;3)-beta-D-galactosyl-(1-&gt;3)-[N-acetyl-alpha-neuraminosyl-(2-&gt;6)]-N-acetyl-beta-D-glucosaminyl-(1-&gt;3)-beta-D-galactosyl-(1-&gt;4)-beta-D-glucosyl-(1&lt;-&gt;1')-N-acyl-sphing-4-enine + CMP + H(+). The enzyme catalyses a globoside MSGG + CMP-N-acetyl-beta-neuraminate = a globoside DSGG + CMP + H(+). It catalyses the reaction a ganglioside GD1a (d18:1(4E)) + CMP-N-acetyl-beta-neuraminate = a ganglioside GT1aalpha (d18:1(4E)) + CMP + H(+). It carries out the reaction a ganglioside GT1b (d18:1(4E)) + CMP-N-acetyl-beta-neuraminate = a ganglioside GQ1balpha (d18:1(4E)) + CMP + H(+). The catalysed reaction is 3-O-[alpha-Neu5Ac-(2-&gt;3)-beta-D-Gal-(1-&gt;3)-alpha-D-GalNAc]-L-Ser-[protein] + CMP-N-acetyl-beta-neuraminate = a 3-O-{alpha-Neu5Ac-(2-&gt;3)-beta-D-Gal-(1-&gt;3)-[alpha-Neu5Ac-(2-&gt;6)]-alpha-D-GalNAc}-L-seryl-[protein] + CMP + H(+). The enzyme catalyses 3-O-[alpha-Neu5Ac-(2-&gt;3)-beta-D-Gal-(1-&gt;3)-alpha-D-GalNAc]-L-Thr-[protein] + CMP-N-acetyl-beta-neuraminate = a 3-O-{alpha-Neu5Ac-(2-&gt;3)-beta-D-Gal-(1-&gt;3)-[alpha-Neu5Ac-(2-&gt;6)]-alpha-D-GalNAc}-L-threonyl-[protein] + CMP + H(+). Its function is as follows. Transfers the sialyl group (N-acetyl-alpha-neuraminyl or NeuAc) from CMP-NeuAc onto glycoproteins and glycolipids, forming an alpha-2,6-linkage. Produces branched type disialyl structures by transfer of a sialyl group onto the GalNAc or GlcNAc residue inside backbone core chains having a terminal sialic acid with an alpha-2,3-linkage on Gal. ST6GalNAcVI prefers glycolipids to glycoproteins, predominantly catalyzing the biosynthesis of ganglioside GD1alpha from GM1b. Besides GMb1, MSGG and other glycolipids, it shows activity towards sialyl Lc4Cer generating disialyl Lc4Cer, which can lead to the synthesis of disialyl Lewis a (Le(a)), suggested to be a cancer-associated antigen. Also has activity toward GD1a and GT1b, and can generate DSGG (disialylgalactosylgloboside) from MSGG (monosialylgalactosylgloboside). The protein is Alpha-N-acetylgalactosaminide alpha-2,6-sialyltransferase 6 (ST6GALNAC6) of Bos taurus (Bovine).